The primary structure comprises 246 residues: Small ribosomal subunit protein uS2 (246 aa).

The protein belongs to the universal ribosomal protein uS2 family. As to quaternary structure, component of the small ribosomal subunit. Mature ribosomes consist of a small (40S) and a large (60S) subunit. The 40S subunit contains about 33 different proteins and 1 molecule of RNA (18S). The 60S subunit contains about 49 different proteins and 3 molecules of RNA (25S, 5.8S and 5S). Interacts with ribosomal protein S21.

The protein localises to the cytoplasm. Its function is as follows. Required for the assembly and/or stability of the 40S ribosomal subunit. Required for the processing of the 20S rRNA-precursor to mature 18S rRNA in a late step of the maturation of 40S ribosomal subunits. This Leishmania infantum protein is Small ribosomal subunit protein uS2.